The following is a 169-amino-acid chain: Photosystem I assembly protein Ycf3 (169 aa).

TPR repeat units follow at residues Ala35–Pro68, Ser72–Leu105, and Gly120–Asn153.

This sequence belongs to the Ycf3 family.

It localises to the plastid. The protein resides in the chloroplast thylakoid membrane. Its function is as follows. Essential for the assembly of the photosystem I (PSI) complex. May act as a chaperone-like factor to guide the assembly of the PSI subunits. In Staurastrum punctulatum (Green alga), this protein is Photosystem I assembly protein Ycf3.